The following is a 510-amino-acid chain: NAD(P)H-quinone oxidoreductase subunit 2, chloroplastic (510 aa).

12 helical membrane-spanning segments follow: residues 24–44, 59–79, 99–119, 124–144, 149–169, 184–204, 229–249, 295–315, 323–343, 354–374, 395–415, and 418–438; these read LLLF…GLIL, WFYF…FFRW, IFQF…VEYI, MAIT…MFLC, LITI…LSGY, LLMG…LYGL, ISIA…PAPF, WHLL…LIAL, MLAY…IVGD, YMLF…SFGL, ALSS…AGFF, and LYLF…IGLL.

This sequence belongs to the complex I subunit 2 family. As to quaternary structure, NDH is composed of at least 16 different subunits, 5 of which are encoded in the nucleus.

Its subcellular location is the plastid. The protein resides in the chloroplast thylakoid membrane. It catalyses the reaction a plastoquinone + NADH + (n+1) H(+)(in) = a plastoquinol + NAD(+) + n H(+)(out). It carries out the reaction a plastoquinone + NADPH + (n+1) H(+)(in) = a plastoquinol + NADP(+) + n H(+)(out). NDH shuttles electrons from NAD(P)H:plastoquinone, via FMN and iron-sulfur (Fe-S) centers, to quinones in the photosynthetic chain and possibly in a chloroplast respiratory chain. The immediate electron acceptor for the enzyme in this species is believed to be plastoquinone. Couples the redox reaction to proton translocation, and thus conserves the redox energy in a proton gradient. This is NAD(P)H-quinone oxidoreductase subunit 2, chloroplastic from Coelogyne cristata (Orchid).